A 490-amino-acid chain; its full sequence is Cysteine desulfurase, mitochondrial (490 aa).

Pyridoxal 5'-phosphate contacts are provided by residues 161–162 (AT), N241, Q269, and 289–291 (SSH). K292 is subject to N6-(pyridoxal phosphate)lysine. A pyridoxal 5'-phosphate-binding site is contributed by T329. Residue C414 is the Cysteine persulfide intermediate of the active site. Position 414 (C414) interacts with [2Fe-2S] cluster.

Belongs to the class-V pyridoxal-phosphate-dependent aminotransferase family. NifS/IscS subfamily. Pyridoxal 5'-phosphate serves as cofactor.

It localises to the mitochondrion. It catalyses the reaction (sulfur carrier)-H + L-cysteine = (sulfur carrier)-SH + L-alanine. In terms of biological role, catalyzes the removal of elemental sulfur from cysteine to produce alanine. It supplies the inorganic sulfur for iron-sulfur (Fe-S) clusters. Plays a role in both tRNA-processing and mitochondrial metabolism. Involved in the 2-thio-modification of both 5-carboxymethylaminomethyl-2-thiouridine in mitochondrial tRNAs and 5-methoxycarbonylmethyl-2-thiouridine (mcm5s2U) in cytoplasmic tRNAs. The sequence is that of Cysteine desulfurase, mitochondrial from Eremothecium gossypii (strain ATCC 10895 / CBS 109.51 / FGSC 9923 / NRRL Y-1056) (Yeast).